A 187-amino-acid chain; its full sequence is dITP/XTP pyrophosphatase (187 aa).

7 to 12 (TNNPYK) contributes to the substrate binding site. The Mg(2+) site is built by Glu36 and Asp65. Asp65 functions as the Proton acceptor in the catalytic mechanism. Residues Thr66, 140–143 (FGYD), Lys163, and 168–169 (HR) contribute to the substrate site.

It belongs to the HAM1 NTPase family. In terms of assembly, homodimer. Mg(2+) serves as cofactor.

The catalysed reaction is XTP + H2O = XMP + diphosphate + H(+). It carries out the reaction dITP + H2O = dIMP + diphosphate + H(+). The enzyme catalyses ITP + H2O = IMP + diphosphate + H(+). Functionally, pyrophosphatase that catalyzes the hydrolysis of nucleoside triphosphates to their monophosphate derivatives, with a high preference for the non-canonical purine nucleotides XTP (xanthosine triphosphate), dITP (deoxyinosine triphosphate) and ITP. Seems to function as a house-cleaning enzyme that removes non-canonical purine nucleotides from the nucleotide pool, thus preventing their incorporation into DNA/RNA and avoiding chromosomal lesions. In Pyrobaculum aerophilum (strain ATCC 51768 / DSM 7523 / JCM 9630 / CIP 104966 / NBRC 100827 / IM2), this protein is dITP/XTP pyrophosphatase.